Here is a 347-residue protein sequence, read N- to C-terminus: GMP reductase (347 aa).

108–131 (ADFEKTKQILDLNPALNFVCIDVA) is an NADP(+) binding site. K(+) is bound by residues Gly181 and Gly183. Cys186 functions as the Thioimidate intermediate in the catalytic mechanism. 216–239 (IVSDGGCTTPGDVAKAFGGGADFV) contributes to the NADP(+) binding site.

It belongs to the IMPDH/GMPR family. GuaC type 1 subfamily. As to quaternary structure, homotetramer.

It carries out the reaction IMP + NH4(+) + NADP(+) = GMP + NADPH + 2 H(+). Catalyzes the irreversible NADPH-dependent deamination of GMP to IMP. It functions in the conversion of nucleobase, nucleoside and nucleotide derivatives of G to A nucleotides, and in maintaining the intracellular balance of A and G nucleotides. This chain is GMP reductase, found in Escherichia coli (strain SMS-3-5 / SECEC).